Here is a 199-residue protein sequence, read N- to C-terminus: Probable GTP-binding protein EngB (199 aa).

Positions 22–196 (NFSEVAFLGR…EDVIINQTLG (175 aa)) constitute an EngB-type G domain. GTP contacts are provided by residues 30–37 (GRSNVGKS), 57–61 (GKTQL), 82–85 (DLPG), 152–155 (TKCD), and 175–177 (VSN). The Mg(2+) site is built by Ser37 and Thr59.

This sequence belongs to the TRAFAC class TrmE-Era-EngA-EngB-Septin-like GTPase superfamily. EngB GTPase family. Mg(2+) is required as a cofactor.

Its function is as follows. Necessary for normal cell division and for the maintenance of normal septation. The chain is Probable GTP-binding protein EngB from Campylobacter jejuni subsp. doylei (strain ATCC BAA-1458 / RM4099 / 269.97).